The following is a 241-amino-acid chain: NAD-dependent protein deacetylase 2 (241 aa).

A Deacetylase sirtuin-type domain is found at 1–241 (MTGKPLVAIL…ALPALLRGLG (241 aa)). NAD(+)-binding residues include Ala13, Thr17, Arg25, Gln92, Val94, Asp95, and His112. Val94 and Asp95 together coordinate nicotinamide. His112 acts as the Proton acceptor in catalysis. Zn(2+)-binding residues include Cys120, Cys123, Cys145, and Cys148. NAD(+) is bound by residues Thr186, Ser187, Asn211, and Ile229.

This sequence belongs to the sirtuin family. Class U subfamily. Requires Zn(2+) as cofactor.

The protein resides in the cytoplasm. The catalysed reaction is N(6)-acetyl-L-lysyl-[protein] + NAD(+) + H2O = 2''-O-acetyl-ADP-D-ribose + nicotinamide + L-lysyl-[protein]. In terms of biological role, NAD-dependent protein deacetylase which modulates the activities of several enzymes which are inactive in their acetylated form. This is NAD-dependent protein deacetylase 2 from Streptomyces coelicolor (strain ATCC BAA-471 / A3(2) / M145).